The primary structure comprises 109 residues: Putative double-stranded DNA mimic protein CKO_01325 (109 aa).

The protein belongs to the putative dsDNA mimic protein family.

In terms of biological role, may act as a double-stranded DNA (dsDNA) mimic. Probably regulates the activity of a dsDNA-binding protein. The chain is Putative double-stranded DNA mimic protein CKO_01325 from Citrobacter koseri (strain ATCC BAA-895 / CDC 4225-83 / SGSC4696).